Consider the following 270-residue polypeptide: Formamidopyrimidine-DNA glycosylase (270 aa).

P2 (schiff-base intermediate with DNA) is an active-site residue. E3 functions as the Proton donor in the catalytic mechanism. K58 serves as the catalytic Proton donor; for beta-elimination activity. Positions 90, 109, and 152 each coordinate DNA. The FPG-type zinc finger occupies R237–R270. R260 functions as the Proton donor; for delta-elimination activity in the catalytic mechanism.

Belongs to the FPG family. In terms of assembly, monomer. The cofactor is Zn(2+).

The enzyme catalyses Hydrolysis of DNA containing ring-opened 7-methylguanine residues, releasing 2,6-diamino-4-hydroxy-5-(N-methyl)formamidopyrimidine.. It catalyses the reaction 2'-deoxyribonucleotide-(2'-deoxyribose 5'-phosphate)-2'-deoxyribonucleotide-DNA = a 3'-end 2'-deoxyribonucleotide-(2,3-dehydro-2,3-deoxyribose 5'-phosphate)-DNA + a 5'-end 5'-phospho-2'-deoxyribonucleoside-DNA + H(+). Functionally, involved in base excision repair of DNA damaged by oxidation or by mutagenic agents. Acts as a DNA glycosylase that recognizes and removes damaged bases. Has a preference for oxidized purines, such as 7,8-dihydro-8-oxoguanine (8-oxoG). Has AP (apurinic/apyrimidinic) lyase activity and introduces nicks in the DNA strand. Cleaves the DNA backbone by beta-delta elimination to generate a single-strand break at the site of the removed base with both 3'- and 5'-phosphates. The protein is Formamidopyrimidine-DNA glycosylase of Sphingopyxis alaskensis (strain DSM 13593 / LMG 18877 / RB2256) (Sphingomonas alaskensis).